The sequence spans 484 residues: ATP synthase subunit beta (484 aa).

An ATP-binding site is contributed by 169–176; sequence GGAGVGKT.

This sequence belongs to the ATPase alpha/beta chains family. In terms of assembly, F-type ATPases have 2 components, CF(1) - the catalytic core - and CF(0) - the membrane proton channel. CF(1) has five subunits: alpha(3), beta(3), gamma(1), delta(1), epsilon(1). CF(0) has three main subunits: a(1), b(2) and c(9-12). The alpha and beta chains form an alternating ring which encloses part of the gamma chain. CF(1) is attached to CF(0) by a central stalk formed by the gamma and epsilon chains, while a peripheral stalk is formed by the delta and b chains.

Its subcellular location is the cell membrane. The enzyme catalyses ATP + H2O + 4 H(+)(in) = ADP + phosphate + 5 H(+)(out). Its function is as follows. Produces ATP from ADP in the presence of a proton gradient across the membrane. The catalytic sites are hosted primarily by the beta subunits. The chain is ATP synthase subunit beta from Cutibacterium acnes (strain DSM 16379 / KPA171202) (Propionibacterium acnes).